Reading from the N-terminus, the 197-residue chain is 7-methyl-GTP pyrophosphatase (197 aa).

The active-site Proton acceptor is aspartate 72.

The protein belongs to the Maf family. YceF subfamily. The cofactor is a divalent metal cation.

The protein localises to the cytoplasm. The enzyme catalyses N(7)-methyl-GTP + H2O = N(7)-methyl-GMP + diphosphate + H(+). In terms of biological role, nucleoside triphosphate pyrophosphatase that hydrolyzes 7-methyl-GTP (m(7)GTP). May have a dual role in cell division arrest and in preventing the incorporation of modified nucleotides into cellular nucleic acids. The chain is 7-methyl-GTP pyrophosphatase from Bordetella avium (strain 197N).